We begin with the raw amino-acid sequence, 365 residues long: Anhydro-N-acetylmuramic acid kinase (365 aa).

12–19 (GTSLDGID) lines the ATP pocket.

This sequence belongs to the anhydro-N-acetylmuramic acid kinase family.

It carries out the reaction 1,6-anhydro-N-acetyl-beta-muramate + ATP + H2O = N-acetyl-D-muramate 6-phosphate + ADP + H(+). The protein operates within amino-sugar metabolism; 1,6-anhydro-N-acetylmuramate degradation. It functions in the pathway cell wall biogenesis; peptidoglycan recycling. Functionally, catalyzes the specific phosphorylation of 1,6-anhydro-N-acetylmuramic acid (anhMurNAc) with the simultaneous cleavage of the 1,6-anhydro ring, generating MurNAc-6-P. Is required for the utilization of anhMurNAc either imported from the medium or derived from its own cell wall murein, and thus plays a role in cell wall recycling. This Rhizorhabdus wittichii (strain DSM 6014 / CCUG 31198 / JCM 15750 / NBRC 105917 / EY 4224 / RW1) (Sphingomonas wittichii) protein is Anhydro-N-acetylmuramic acid kinase.